We begin with the raw amino-acid sequence, 118 residues long: Small ribosomal subunit protein uS13 (118 aa).

The disordered stretch occupies residues 91 to 118 (HRRSLPLRGQRTKNNARTRKGPKKPIKR).

This sequence belongs to the universal ribosomal protein uS13 family. As to quaternary structure, part of the 30S ribosomal subunit. Forms a loose heterodimer with protein S19. Forms two bridges to the 50S subunit in the 70S ribosome.

Located at the top of the head of the 30S subunit, it contacts several helices of the 16S rRNA. In the 70S ribosome it contacts the 23S rRNA (bridge B1a) and protein L5 of the 50S subunit (bridge B1b), connecting the 2 subunits; these bridges are implicated in subunit movement. Contacts the tRNAs in the A and P-sites. The chain is Small ribosomal subunit protein uS13 from Hydrogenovibrio crunogenus (strain DSM 25203 / XCL-2) (Thiomicrospira crunogena).